Consider the following 85-residue polypeptide: uncharacterized protein (85 aa).

It belongs to the ycf76 family.

It is found in the plastid. The protein localises to the chloroplast. This is an uncharacterized protein from Saccharum hybrid (Sugarcane).